The sequence spans 205 residues: Transcription termination/antitermination protein NusG (205 aa).

Residues 154–178 (GDHIMVLSGPFKDFEGDVIEVSPER) form the KOW domain.

Belongs to the NusG family.

Participates in transcription elongation, termination and antitermination. In Synechocystis sp. (strain ATCC 27184 / PCC 6803 / Kazusa), this protein is Transcription termination/antitermination protein NusG.